Here is a 245-residue protein sequence, read N- to C-terminus: Syntaxin-61 (245 aa).

Residues 1 to 224 (MSSAQDPFYI…VMKKAGAKGQ (224 aa)) are Cytoplasmic-facing. A t-SNARE coiled-coil homology domain is found at 153 to 215 (MLLIKQQDEE…EFVQKKVGMV (63 aa)). The helical; Anchor for type IV membrane protein transmembrane segment at 225–245 (MMMICFLLVLFIILFVLVFLT) threads the bilayer.

This sequence belongs to the syntaxin family. Interacts with VTI12 and either SYP41, SYP42 or SYP51 in the trans-Golgi network or with VTI11 and SYP51 in the prevacuolar compartment to form t-SNARE complexes. Core constituent of the SNARE complex required for membrane fusion at the trans-Golgi network. Also observed in the SYP121-complex and cellulose synthases. Colocalizes with PIP2-7 and SYP121 in trafficking vesicles and at the plasma membrane. Interacts with SYP121 and PIP2-7. In terms of tissue distribution, expressed in root, leaf, stem, flower and silique, but not in hypocotyl or young leaf. Strong expression in the vasculature and in guard cells of the leaf epidermis.

It localises to the golgi apparatus. The protein resides in the trans-Golgi network membrane. The protein localises to the prevacuolar compartment membrane. Functionally, vesicle trafficking protein that functions in the secretory pathway; the fusion of phospholipid vesicles containing SYP61 and VTI12 is triggered by YKT61 and YKT62. Together with VTI12, required for membrane fusion. Involved in osmotic stress tolerance and in abscisic acid (ABA) regulation of stomatal responses. Plays a role in the exocytic trafficking of cellulose synthases (CESAs) and the transport of cell wall components to the plasma membrane. Together with SYP121, regulates the post-Golgi trafficking of the aquaporin PIP2-7 to the plasma membrane, thus modulating cell membrane water permeability. The polypeptide is Syntaxin-61 (Arabidopsis thaliana (Mouse-ear cress)).